Here is a 62-residue protein sequence, read N- to C-terminus: Photosystem II reaction center protein Z (62 aa).

A run of 2 helical transmembrane segments spans residues 8-28 (LVVA…ITLS) and 41-61 (VTAS…NSFV).

The protein belongs to the PsbZ family. As to quaternary structure, PSII is composed of 1 copy each of membrane proteins PsbA, PsbB, PsbC, PsbD, PsbE, PsbF, PsbH, PsbI, PsbJ, PsbK, PsbL, PsbM, PsbT, PsbX, PsbY, PsbZ, Psb30/Ycf12, at least 3 peripheral proteins of the oxygen-evolving complex and a large number of cofactors. It forms dimeric complexes.

The protein resides in the plastid. It localises to the chloroplast thylakoid membrane. Functionally, may control the interaction of photosystem II (PSII) cores with the light-harvesting antenna, regulates electron flow through the 2 photosystem reaction centers. PSII is a light-driven water plastoquinone oxidoreductase, using light energy to abstract electrons from H(2)O, generating a proton gradient subsequently used for ATP formation. The sequence is that of Photosystem II reaction center protein Z from Cyanidioschyzon merolae (strain NIES-3377 / 10D) (Unicellular red alga).